Consider the following 253-residue polypeptide: MICOS complex subunit mic25-b (253 aa).

The N-myristoyl glycine moiety is linked to residue Gly-2. Positions 38–82 (KDQSTWAASGAASGSATVPSKVGSSASHPAAASKDGAHKPTAAGV) are disordered. The span at 44-53 (AASGAASGSA) shows a compositional bias: low complexity. Residues 87–116 (AEEDLYRRYEREQTLIQEELARLAKREKDA) adopt a coiled-coil conformation. Positions 206–248 (DPVCMDLQSNILKCYAENKQERLNCSDLAKEYQKCVSAAQKNL) constitute a CHCH domain. 2 consecutive short sequence motifs (cx9C motif) follow at residues 209 to 219 (CMDLQSNILKC) and 230 to 240 (CSDLAKEYQKC). 2 disulfide bridges follow: Cys-209–Cys-240 and Cys-219–Cys-230.

It belongs to the MICOS complex subunit Mic19 family. Metazoan Mic25 subfamily. As to quaternary structure, component of the mitochondrial contact site and cristae organizing system (MICOS) complex (also known as MINOS or MitOS complex).

The protein resides in the mitochondrion inner membrane. In terms of biological role, component of the MICOS complex, a large protein complex of the mitochondrial inner membrane that plays crucial roles in the maintenance of crista junctions, inner membrane architecture, and formation of contact sites to the outer membrane. In Xenopus laevis (African clawed frog), this protein is MICOS complex subunit mic25-b (chchd6-b).